Reading from the N-terminus, the 154-residue chain is Nuclear cap-binding protein subunit 2 (154 aa).

MRNA contacts are provided by residues Tyr-10, Tyr-33, 102–106, 113–117, and 123–124; these read RVDWD, RQYGR, and QV. Residues 30-108 form the RRM domain; it reads CTLYVGNLSF…RLIRVDWDAG (79 aa).

Belongs to the RRM NCBP2 family. As to quaternary structure, component of the nuclear cap-binding complex (CBC), a heterodimer composed of Cbp80 and Cbp20 that interacts with m7GpppG-capped RNA. Interacts with Ars2.

It is found in the nucleus. Component of the cap-binding complex (CBC), which binds co-transcriptionally to the 5' cap of pre-mRNAs and is involved in various processes such as pre-mRNA splicing and RNA-mediated gene silencing (RNAi). The CBC complex is involved in miRNA-mediated RNA interference via its interaction with Ars2 and is required for primary microRNAs (miRNAs) processing. Also involved in innate immunity via the short interfering RNAs (siRNAs) processing machinery by restricting the viral RNA production. In the CBC complex, Cbp20 recognizes and binds capped RNAs (m7GpppG-capped RNA) but requires Cbp80 to stabilize the movement of its N-terminal loop and lock the CBC into a high affinity cap-binding state with the cap structure. This Drosophila persimilis (Fruit fly) protein is Nuclear cap-binding protein subunit 2 (Cbp20).